A 318-amino-acid chain; its full sequence is Transaldolase (318 aa).

The Schiff-base intermediate with substrate role is filled by Lys-132.

The protein belongs to the transaldolase family. Type 1 subfamily. As to quaternary structure, homodimer.

It localises to the cytoplasm. It carries out the reaction D-sedoheptulose 7-phosphate + D-glyceraldehyde 3-phosphate = D-erythrose 4-phosphate + beta-D-fructose 6-phosphate. It functions in the pathway carbohydrate degradation; pentose phosphate pathway; D-glyceraldehyde 3-phosphate and beta-D-fructose 6-phosphate from D-ribose 5-phosphate and D-xylulose 5-phosphate (non-oxidative stage): step 2/3. Its function is as follows. Transaldolase is important for the balance of metabolites in the pentose-phosphate pathway. The sequence is that of Transaldolase from Shewanella sp. (strain ANA-3).